Consider the following 264-residue polypeptide: Hydroxyethylthiazole kinase (264 aa).

A substrate-binding site is contributed by methionine 43. ATP contacts are provided by lysine 119 and serine 165. Glycine 192 provides a ligand contact to substrate.

Belongs to the Thz kinase family. Mg(2+) serves as cofactor.

The enzyme catalyses 5-(2-hydroxyethyl)-4-methylthiazole + ATP = 4-methyl-5-(2-phosphooxyethyl)-thiazole + ADP + H(+). Its pathway is cofactor biosynthesis; thiamine diphosphate biosynthesis; 4-methyl-5-(2-phosphoethyl)-thiazole from 5-(2-hydroxyethyl)-4-methylthiazole: step 1/1. In terms of biological role, catalyzes the phosphorylation of the hydroxyl group of 4-methyl-5-beta-hydroxyethylthiazole (THZ). The chain is Hydroxyethylthiazole kinase from Methanocorpusculum labreanum (strain ATCC 43576 / DSM 4855 / Z).